The following is a 114-amino-acid chain: Large ribosomal subunit protein bL19 (114 aa).

It belongs to the bacterial ribosomal protein bL19 family.

In terms of biological role, this protein is located at the 30S-50S ribosomal subunit interface and may play a role in the structure and function of the aminoacyl-tRNA binding site. The chain is Large ribosomal subunit protein bL19 from Clostridium botulinum (strain Loch Maree / Type A3).